The chain runs to 646 residues: Autophagy-related protein 28 (646 aa).

2 disordered regions span residues 1–148 (MSSP…HVDN) and 221–245 (PTRS…RGLK). Polar residues predominate over residues 12–21 (SPRQRLSNPL). Over residues 63-75 (SATSTRRSSSPAS) the composition is skewed to low complexity. The segment covering 106-122 (MMMNQHPSRQSTVSSHG) has biased composition (polar residues). Coiled-coil stretches lie at residues 283-350 (LDKM…MEDV) and 485-514 (QQAA…ESKH). Disordered stretches follow at residues 475 to 494 (SQAG…SQLS) and 546 to 612 (AAAV…RGSA). Composition is skewed to basic and acidic residues over residues 557-575 (STDK…SHDE) and 588-597 (RMEDHDHDPP).

Belongs to the ATG28 family.

The protein resides in the cytoplasm. The protein localises to the vacuole membrane. It localises to the cytoplasmic vesicle membrane. Required for the autophagic degradation of peroxisomes called pexophagy, but not essential for general autophagy. Involved in resistance to elevated pH. The chain is Autophagy-related protein 28 from Gibberella zeae (strain ATCC MYA-4620 / CBS 123657 / FGSC 9075 / NRRL 31084 / PH-1) (Wheat head blight fungus).